A 291-amino-acid chain; its full sequence is MTLTTSDKAAVLADALPWLTALNDKIVVVKYGGNAMTDDRLKAAFAADMVFLRNCGIHPVVVHGGGPQISAMLKKLGIAGDFKGGFRVTTPEVLDVARMVLFGQVGRELVNLINAYGPYAVGITGEDAHLFTAVRRTVMVDGVATDIGLVGDVERVNTDAVLDLIDAGRIPVVSTIAPDTDGLVYNINADTAAAALAEALSAEKLLMLTDVEGLYTRWPDRDSLVSQIDSDALAELLPTLEAGMVPKIEACLRAIDGGVPSAHVIDGRVEHCVLVELFTDEGAGTKVVQST.

Substrate-binding positions include 65–66, arginine 87, and asparagine 186; that span reads GG.

This sequence belongs to the acetylglutamate kinase family. ArgB subfamily.

It localises to the cytoplasm. The enzyme catalyses N-acetyl-L-glutamate + ATP = N-acetyl-L-glutamyl 5-phosphate + ADP. It functions in the pathway amino-acid biosynthesis; L-arginine biosynthesis; N(2)-acetyl-L-ornithine from L-glutamate: step 2/4. Catalyzes the ATP-dependent phosphorylation of N-acetyl-L-glutamate. This is Acetylglutamate kinase from Mycolicibacterium vanbaalenii (strain DSM 7251 / JCM 13017 / BCRC 16820 / KCTC 9966 / NRRL B-24157 / PYR-1) (Mycobacterium vanbaalenii).